We begin with the raw amino-acid sequence, 480 residues long: 2-succinylbenzoate--CoA ligase (480 aa).

It belongs to the ATP-dependent AMP-binding enzyme family. MenE subfamily.

The catalysed reaction is 2-succinylbenzoate + ATP + CoA = 2-succinylbenzoyl-CoA + AMP + diphosphate. The protein operates within quinol/quinone metabolism; 1,4-dihydroxy-2-naphthoate biosynthesis; 1,4-dihydroxy-2-naphthoate from chorismate: step 5/7. Its pathway is quinol/quinone metabolism; menaquinone biosynthesis. Converts 2-succinylbenzoate (OSB) to 2-succinylbenzoyl-CoA (OSB-CoA). This is 2-succinylbenzoate--CoA ligase from Oceanobacillus iheyensis (strain DSM 14371 / CIP 107618 / JCM 11309 / KCTC 3954 / HTE831).